The primary structure comprises 171 residues: Protein-export protein SecB (171 aa).

The protein belongs to the SecB family. As to quaternary structure, homotetramer, a dimer of dimers. One homotetramer interacts with 1 SecA dimer.

The protein localises to the cytoplasm. One of the proteins required for the normal export of preproteins out of the cell cytoplasm. It is a molecular chaperone that binds to a subset of precursor proteins, maintaining them in a translocation-competent state. It also specifically binds to its receptor SecA. The protein is Protein-export protein SecB of Histophilus somni (strain 129Pt) (Haemophilus somnus).